We begin with the raw amino-acid sequence, 393 residues long: Protein TsgA (393 aa).

12 helical membrane-spanning segments follow: residues 11–31 (WISF…GMVM), 51–71 (FLNA…EIVP), 78–98 (FGFL…SLAL), 101–121 (AAMF…TFLV), 134–154 (LLFT…IAAF), 162–182 (WYWV…LTFG), 206–226 (IGVL…LGFI), 245–265 (TLVS…SFIL), 273–293 (ILTV…TGTP), 297–317 (AWSI…IITL), 332–352 (FVLT…GPIV), and 361–381 (LLTA…LGFV).

It belongs to the major facilitator superfamily. TsgA family.

It is found in the cell inner membrane. In Escherichia coli O139:H28 (strain E24377A / ETEC), this protein is Protein TsgA.